A 571-amino-acid chain; its full sequence is Proline--tRNA ligase (571 aa).

Belongs to the class-II aminoacyl-tRNA synthetase family. ProS type 1 subfamily. As to quaternary structure, homodimer.

The protein localises to the cytoplasm. It catalyses the reaction tRNA(Pro) + L-proline + ATP = L-prolyl-tRNA(Pro) + AMP + diphosphate. Functionally, catalyzes the attachment of proline to tRNA(Pro) in a two-step reaction: proline is first activated by ATP to form Pro-AMP and then transferred to the acceptor end of tRNA(Pro). As ProRS can inadvertently accommodate and process non-cognate amino acids such as alanine and cysteine, to avoid such errors it has two additional distinct editing activities against alanine. One activity is designated as 'pretransfer' editing and involves the tRNA(Pro)-independent hydrolysis of activated Ala-AMP. The other activity is designated 'posttransfer' editing and involves deacylation of mischarged Ala-tRNA(Pro). The misacylated Cys-tRNA(Pro) is not edited by ProRS. The polypeptide is Proline--tRNA ligase (Pseudomonas paraeruginosa (strain DSM 24068 / PA7) (Pseudomonas aeruginosa (strain PA7))).